A 500-amino-acid chain; its full sequence is MKTFLPSKFIVDRIEDRCIKCKVCITQCSFDTHYYDEDDDQIKVRNQNCVGCHRCVTFCPTNALVVRNNPLEYRQNANWTPEMIEDIFKQAETGGVLLTGMGMDKAKPIYWDKLLINASQVTNPSIDPLREPMELTTYLGRRPDKAAFDNCGNVEENITPLVKIDVPVMFSAMSYGAISLNVHRSLAQAAKNMGTMWNTGEGGLHSSLMEFKDNTIVQVASGRYGVQNDYLNSGRIVEIKIGQGAKPGIGGHLPGEKVSADVSLTRMIPMGTDAISPAPQHDIYSIEDLSQLIYALKEATHYRVPISVKIAAVHNVSAIASGIVRAGADIVTIDGMRGATGAAPKVIRDNVGIPIELALAAVDSRLREEGIRNQASLVISGGIRNSGDVFKAIALGADAVNIGTAALVALGCHLCQQCHTGKCAWGICTSDLALTKRINPEIGAKRLTNLLRGWSLEIKDMLGGLGVNAIESLRGNRLHLRGVGLSAEELKILGVRAAGE.

4Fe-4S ferredoxin-type domains are found at residues 7–38 and 40–69; these read SKFI…YDED and DQIK…VRNN. [4Fe-4S] cluster is bound by residues Cys-18, Cys-21, Cys-24, Cys-28, Cys-49, Cys-52, Cys-55, and Cys-59.

Belongs to the glutamate synthase family. The cofactor is FMN.

It catalyses the reaction 2 L-glutamate + NADP(+) = L-glutamine + 2-oxoglutarate + NADPH + H(+). The protein is Archaeal-type glutamate synthase [NADPH] of Dehalococcoides mccartyi (strain ATCC BAA-2266 / KCTC 15142 / 195) (Dehalococcoides ethenogenes (strain 195)).